We begin with the raw amino-acid sequence, 473 residues long: N-lysine methyltransferase SETD6 (473 aa).

Position 39 is an N6-methylated lysine; by autocatalysis (Lys39). An SET domain is found at Pro60–Gly286. An S-adenosyl-L-methionine-binding site is contributed by Ala73 to Tyr75. Trp122 contacts substrate. At Lys179 the chain carries N6-methylated lysine; by autocatalysis. Position 223 (Tyr223) interacts with S-adenosyl-L-methionine. Substrate contacts are provided by Ser224 and Gln226. Residue Asn251 to His252 coordinates S-adenosyl-L-methionine. Tyr262 and Tyr297 together coordinate substrate. Residue Tyr297 participates in S-adenosyl-L-methionine binding. Lys372 bears the N6-methylated lysine; by autocatalysis mark.

The protein belongs to the class V-like SAM-binding methyltransferase superfamily. Histone-lysine methyltransferase family. SETD6 subfamily. In terms of assembly, monomer, homodimer and homotrimer; these structures are stabilized in the presence of S-adenosyl-L-methionine (SAM). Automethylated; Lys-39 and Lys-179 serve as the major automethylation sites.

It localises to the nucleus. It carries out the reaction L-lysyl-[protein] + S-adenosyl-L-methionine = N(6)-methyl-L-lysyl-[protein] + S-adenosyl-L-homocysteine + H(+). The enzyme catalyses L-lysyl(8)-[histone H2AZ] + S-adenosyl-L-methionine = N(6)-methyl-L-lysyl(8)-[histone H2AZ] + S-adenosyl-L-homocysteine + H(+). Activated by automethylation. In terms of biological role, protein-lysine N-methyltransferase. Monomethylates 'Lys-310' of the RELA subunit of NF-kappa-B complex, leading to down-regulation of NF-kappa-B transcription factor activity. Monomethylates 'Lys-8' of H2AZ (H2AZK8me1). Required for the maintenance of embryonic stem cell self-renewal. Methylates PAK4. In Homo sapiens (Human), this protein is N-lysine methyltransferase SETD6.